We begin with the raw amino-acid sequence, 260 residues long: MAGRWNLEGCTALVTGGSRGIGYGIVEELASLGASVYTCSRNQKELNDCLTQWRSKGFKVEASVCDLSSRSERQELMNTVANHFHGKLNILVNNAGIVIYKEAKDYTVEDYSLIMSINFEAAYHLSVLAHPFLKASERGNVVFISSVSGALAVPYEAVYGATKGAMDQLTRCLAFEWAKDNIRVNGVGPGVIATSLVEMTIQDPEQKENLNKLIDRCALRRMGEPKELAAMVAFLCFPAASYVTGQIIYVDGGLMANCGF.

18–41 (SRGIGYGIVEELASLGASVYTCSR) contributes to the NADP(+) binding site. Ser146 serves as a coordination point for substrate. The Proton acceptor role is filled by Tyr159. Residue 192–196 (IATSL) coordinates NADP(+).

It belongs to the short-chain dehydrogenases/reductases (SDR) family. In terms of assembly, homodimer.

It catalyses the reaction pseudotropine + NADP(+) = tropinone + NADPH + H(+). It functions in the pathway alkaloid biosynthesis; tropane alkaloid biosynthesis. In terms of biological role, catalyzes the stereospecific reduction of tropinone to pseudotropine. In Datura stramonium (Jimsonweed), this protein is Tropinone reductase 2 (TR2).